Consider the following 447-residue polypeptide: Adenylosuccinate synthetase (447 aa).

GTP-binding positions include 35 to 41 (GDEGKGK) and 63 to 65 (GHT). Residue D36 is the Proton acceptor of the active site. Mg(2+) contacts are provided by D36 and G63. IMP is bound by residues 36–39 (DEGK), 61–64 (NAGH), T153, R167, N245, T260, and R324. The active-site Proton donor is H64. Substrate is bound at residue 320-326 (VTTKRKR). Residues R326, 352 to 354 (KLD), and 435 to 437 (GVG) each bind GTP.

Belongs to the adenylosuccinate synthetase family. As to quaternary structure, homodimer. Requires Mg(2+) as cofactor.

The protein resides in the cytoplasm. The catalysed reaction is IMP + L-aspartate + GTP = N(6)-(1,2-dicarboxyethyl)-AMP + GDP + phosphate + 2 H(+). It functions in the pathway purine metabolism; AMP biosynthesis via de novo pathway; AMP from IMP: step 1/2. Functionally, plays an important role in the de novo pathway and in the salvage pathway of purine nucleotide biosynthesis. Catalyzes the first committed step in the biosynthesis of AMP from IMP. This Drosophila erecta (Fruit fly) protein is Adenylosuccinate synthetase.